The following is a 735-amino-acid chain: MAKELSRDEYTVCDQCRARKIRCSREKPSCRNCGRLGLQCEWSGQGKKCNQTTLLSHTILGMGSRLEQLETALADTQKSLKRLFDGSSTISPSARCPASPASPSPRLSDKRFPDSIQSAVFTRPLGRFLVDQDRDERCFGPTSLESLMLNIKDELLQSPDTDRHTVKECVLQAQRKIDHLVGQGEEIPIGGKAPPTMPPFAILEAMIEPYFTTTHGHFPIWSKKRFTEMATALRQSAPSERDLASIVCCNNLILMAMSADSPGSHQRESMMSKQTRKTSSIDFDLITGFLTNAKRAVSNIDQLVSPHLVNVQALVSLHIVAQVYLSIGLSETLLALAIRCAKSIGVHQWHAFQGRLSDDDVNERQNLSYCLYMLDKAVCWTAGSSPSIPVSDVHFDPRLVPSENGIPSSLVAKAEMARIEETVYLEIYAVHVQARDENQVRGFAAAIMSKLQVCLTETGVDLDQIQTSLDGSASNLQLAIRYLSVQLLLIWPHKHHPDPMFQQAPEVARMCLKLLLRLWHSPPDQGSQAVFSFFLASLPSLYLYEVLISILCGRGTNRDIDMLQEFVEMLQTITDCRAEASYNRRLYQLSLIVTDVVKARRTQHKRPKPTSEGPTDPYLMSELLSPATTGYSYMNSEVQETYDSRFDGGVFQDPDGSFAPMSSITSTSGELARGSDEFLSQLRSYGKSAPGNEHFDSLAMEALGESVLFWKGVNQGASADSPSVRCDLGERLNYI.

Positions 13 to 40 form a DNA-binding region, zn(2)-C6 fungal-type; the sequence is CDQCRARKIRCSREKPSCRNCGRLGLQC. The segment at 89–110 is disordered; the sequence is TISPSARCPASPASPSPRLSDK. Low complexity predominate over residues 91-106; sequence SPSARCPASPASPSPR.

It is found in the nucleus. Transcription factor that regulates the expression of the gene cluster that mediates the biosynthesis of sphingofungins, bioactive molecules acting as sphingolipid inhibitors via inhibiting serine palmitoyl transferase (SPT). The protein is Transcription factor sphG of Aspergillus fumigatus (strain CBS 144.89 / FGSC A1163 / CEA10) (Neosartorya fumigata).